Here is a 305-residue protein sequence, read N- to C-terminus: ATP-dependent Clp protease proteolytic subunit-related protein 4, chloroplastic (305 aa).

The transit peptide at 1–68 (MEVAAATATS…SSDLCGAKLR (68 aa)) directs the protein to the chloroplast.

This sequence belongs to the peptidase S14 family. Component of the chloroplastic Clp protease core complex which consist of at least 16 proteins: CLPP4 (3 copies), CLPP5 (3 copies), CLPR4 (2 copies), ClpP1 (1 copy), CLPP6 (1 copy), CLPR2 (1 copy), CLPT1 (1 copy), CLPT2 (1 copy) and 3 copies of CLPP3 and/or CLPR1 and/or CLPR3. The core complex is organized in two heptameric rings, one containing CLPP3,4,5,6 in a 1:2:3:1 ratio and the other CLPP1 and CLPR1,2,3,4 in a 3:1:1:1:1 ratio.

Its subcellular location is the plastid. The protein localises to the chloroplast. Involved in plastid protein homeostasis. The protein is ATP-dependent Clp protease proteolytic subunit-related protein 4, chloroplastic of Arabidopsis thaliana (Mouse-ear cress).